A 509-amino-acid polypeptide reads, in one-letter code: Bifunctional purine biosynthesis protein PurH (509 aa).

The MGS-like domain maps to M1–V146.

This sequence belongs to the PurH family.

It catalyses the reaction (6R)-10-formyltetrahydrofolate + 5-amino-1-(5-phospho-beta-D-ribosyl)imidazole-4-carboxamide = 5-formamido-1-(5-phospho-D-ribosyl)imidazole-4-carboxamide + (6S)-5,6,7,8-tetrahydrofolate. The enzyme catalyses IMP + H2O = 5-formamido-1-(5-phospho-D-ribosyl)imidazole-4-carboxamide. Its pathway is purine metabolism; IMP biosynthesis via de novo pathway; 5-formamido-1-(5-phospho-D-ribosyl)imidazole-4-carboxamide from 5-amino-1-(5-phospho-D-ribosyl)imidazole-4-carboxamide (10-formyl THF route): step 1/1. The protein operates within purine metabolism; IMP biosynthesis via de novo pathway; IMP from 5-formamido-1-(5-phospho-D-ribosyl)imidazole-4-carboxamide: step 1/1. This is Bifunctional purine biosynthesis protein PurH from Natranaerobius thermophilus (strain ATCC BAA-1301 / DSM 18059 / JW/NM-WN-LF).